We begin with the raw amino-acid sequence, 1062 residues long: Exportin-T (1062 aa).

It belongs to the exportin family.

It localises to the nucleus. It is found in the cytoplasm. TRNA nucleus export receptor which facilitates tRNA translocation across the nuclear pore complex. Involved in pre-tRNA splicing, probably by affecting the interaction of pre-tRNA with splicing endonuclease. In Vanderwaltozyma polyspora (strain ATCC 22028 / DSM 70294 / BCRC 21397 / CBS 2163 / NBRC 10782 / NRRL Y-8283 / UCD 57-17) (Kluyveromyces polysporus), this protein is Exportin-T (LOS1).